The primary structure comprises 75 residues: Theromacin (75 aa).

Intrachain disulfides connect Cys-2-Cys-9, Cys-24-Cys-28, Cys-31-Cys-73, Cys-39-Cys-47, and Cys-57-Cys-59.

This sequence belongs to the macin family.

Its subcellular location is the secreted. Its function is as follows. Has a bactericial activity. The sequence is that of Theromacin from Hirudo medicinalis (Medicinal leech).